The primary structure comprises 206 residues: Urease accessory protein UreG (206 aa).

Residue 14–21 (GPVGSGKT) participates in GTP binding.

Belongs to the SIMIBI class G3E GTPase family. UreG subfamily. In terms of assembly, homodimer. UreD, UreF and UreG form a complex that acts as a GTP-hydrolysis-dependent molecular chaperone, activating the urease apoprotein by helping to assemble the nickel containing metallocenter of UreC. The UreE protein probably delivers the nickel.

It localises to the cytoplasm. In terms of biological role, facilitates the functional incorporation of the urease nickel metallocenter. This process requires GTP hydrolysis, probably effectuated by UreG. The chain is Urease accessory protein UreG from Brucella anthropi (strain ATCC 49188 / DSM 6882 / CCUG 24695 / JCM 21032 / LMG 3331 / NBRC 15819 / NCTC 12168 / Alc 37) (Ochrobactrum anthropi).